Here is an 812-residue protein sequence, read N- to C-terminus: Probable inorganic carbon transporter subunit DabA (812 aa).

Zn(2+) contacts are provided by cysteine 337, aspartate 339, histidine 499, and cysteine 514.

It belongs to the inorganic carbon transporter (TC 9.A.2) DabA family. Forms a complex with DabB. Requires Zn(2+) as cofactor.

Its subcellular location is the cell inner membrane. Its function is as follows. Part of an energy-coupled inorganic carbon pump. This Xanthomonas oryzae pv. oryzae (strain KACC10331 / KXO85) protein is Probable inorganic carbon transporter subunit DabA.